A 680-amino-acid chain; its full sequence is HEAT repeat-containing protein 3 (680 aa).

Residues 1–11 are compositionally biased toward basic residues; that stretch reads MGKSRTKRFKR. Residues 1-39 are disordered; the sequence is MGKSRTKRFKRPQFSPTGDCQAEAAAAANGTGGEEDDGP. Serine 15 bears the Phosphoserine mark. Low complexity predominate over residues 18-29; that stretch reads GDCQAEAAAAAN. 2 HEAT repeats span residues 38–69 and 74–110; these read GPAA…VQQR and GLAR…SACG. A Phosphoserine modification is found at serine 144. Threonine 340 carries the phosphothreonine modification.

The protein belongs to the nuclear import and ribosome assembly adapter family. As to quaternary structure, component of a hexameric 5S RNP precursor complex, composed of 5S RNA, RRS1, RPF2/BXDC1, RPL5, RPL11 and HEATR3; this complex acts as a precursor for ribosome assembly.

Functionally, plays a role in ribosome biogenesis and in nuclear import of the 60S ribosomal protein L5/large ribosomal subunit protein uL18 (RPL5). Required for proper erythrocyte maturation. This Homo sapiens (Human) protein is HEAT repeat-containing protein 3 (HEATR3).